The following is a 214-amino-acid chain: Phosphatidylcholine transfer protein (214 aa).

N-acetylmethionine is present on methionine 1. The 212-residue stretch at 1–212 folds into the START domain; the sequence is MELAAGSFSE…MARACQNYLK (212 aa). A 1,2-diacyl-sn-glycero-3-phosphocholine contacts are provided by tyrosine 72 and arginine 78. Serine 139 bears the Phosphoserine mark. Position 157 (glutamine 157) interacts with a 1,2-diacyl-sn-glycero-3-phosphocholine.

As to quaternary structure, interacts with ACOT13/THEM2. Highest expression in liver, placenta, testis, kidney and heart. Low levels in brain and lung. No expression detected in thymus.

It is found in the cytoplasm. Catalyzes the transfer of phosphatidylcholine between membranes. Binds a single lipid molecule. This Homo sapiens (Human) protein is Phosphatidylcholine transfer protein (PCTP).